Consider the following 365-residue polypeptide: Carbamoyl phosphate synthase small chain (365 aa).

CPSase regions lie at residues 1 to 166 (MKRQ…PSPG) and 1 to 169 (MKRQ…GRGH). Residues serine 45, glycine 218, and glycine 220 each coordinate L-glutamine. Residues 170-357 (RVVLVDFGMK…LTMIENFKKE (188 aa)) enclose the Glutamine amidotransferase type-1 domain. The active-site Nucleophile is cysteine 245. L-glutamine contacts are provided by leucine 246, glutamine 249, asparagine 287, glycine 289, and tyrosine 290. Active-site residues include histidine 330 and glutamate 332.

The protein belongs to the CarA family. As to quaternary structure, composed of two chains; the small (or glutamine) chain promotes the hydrolysis of glutamine to ammonia, which is used by the large (or ammonia) chain to synthesize carbamoyl phosphate. Tetramer of heterodimers (alpha,beta)4.

It carries out the reaction hydrogencarbonate + L-glutamine + 2 ATP + H2O = carbamoyl phosphate + L-glutamate + 2 ADP + phosphate + 2 H(+). It catalyses the reaction L-glutamine + H2O = L-glutamate + NH4(+). The protein operates within amino-acid biosynthesis; L-arginine biosynthesis; carbamoyl phosphate from bicarbonate: step 1/1. Its pathway is pyrimidine metabolism; UMP biosynthesis via de novo pathway; (S)-dihydroorotate from bicarbonate: step 1/3. Its function is as follows. Small subunit of the glutamine-dependent carbamoyl phosphate synthetase (CPSase). CPSase catalyzes the formation of carbamoyl phosphate from the ammonia moiety of glutamine, carbonate, and phosphate donated by ATP, constituting the first step of 2 biosynthetic pathways, one leading to arginine and/or urea and the other to pyrimidine nucleotides. The small subunit (glutamine amidotransferase) binds and cleaves glutamine to supply the large subunit with the substrate ammonia. The polypeptide is Carbamoyl phosphate synthase small chain (Bacillus anthracis).